The chain runs to 232 residues: Esterase YpfH (232 aa).

Active-site charge relay system residues include S111, D159, and H191.

It belongs to the AB hydrolase superfamily. AB hydrolase 2 family.

Its function is as follows. Displays esterase activity toward palmitoyl-CoA and pNP-butyrate. The protein is Esterase YpfH (ypfH) of Escherichia coli (strain K12).